Consider the following 452-residue polypeptide: UPF0761 membrane protein Bpet3042 (452 aa).

Helical transmembrane passes span 56-76 (VLGI…FPVF), 114-134 (LTAI…MTID), 153-173 (ALVY…SLWA), 195-215 (AISF…FVVV), 225-245 (ALVG…AFAY), and 259-279 (AFAT…AVLF).

This sequence belongs to the UPF0761 family.

Its subcellular location is the cell inner membrane. The chain is UPF0761 membrane protein Bpet3042 from Bordetella petrii (strain ATCC BAA-461 / DSM 12804 / CCUG 43448).